The primary structure comprises 763 residues: Phosphoglycerol transferase I (763 aa).

The next 4 helical transmembrane spans lie at 1–21 (MSELLSFALFLASVLIYAWKA), 26–46 (WWFAATLTVLGLFVVLNITLF), 77–97 (ILPGIGIVLGLTAVFGALGWI), and 108–128 (FGYSLLALLLALGSVDASPAF).

Belongs to the OpgB family.

Its subcellular location is the cell inner membrane. The catalysed reaction is a phosphatidylglycerol + a membrane-derived-oligosaccharide D-glucose = a 1,2-diacyl-sn-glycerol + a membrane-derived-oligosaccharide 6-(glycerophospho)-D-glucose.. Its pathway is glycan metabolism; osmoregulated periplasmic glucan (OPG) biosynthesis. Its function is as follows. Transfers a phosphoglycerol residue from phosphatidylglycerol to the membrane-bound nascent glucan backbones. The chain is Phosphoglycerol transferase I from Shigella boydii serotype 18 (strain CDC 3083-94 / BS512).